Reading from the N-terminus, the 157-residue chain is MFKVGIGYDVHRFVEGRKLILGGVEIPFEKGLLGHSDADVLVHAIIDAILGAMGENDIGRLFPDSSPNYKDISSLVLLKEVAKLLEEKNMKIVNIDSTVVSQRPKISPYTNEMKNKIADCLKIESTQVNIKGKTTEGLGFEGREEGISAYAVVLICE.

D9 and H11 together coordinate a divalent metal cation. Residues 9–11 (DVH) and 35–36 (HS) each bind 4-CDP-2-C-methyl-D-erythritol 2-phosphate. H43 serves as a coordination point for a divalent metal cation. 4-CDP-2-C-methyl-D-erythritol 2-phosphate contacts are provided by residues 57–59 (DIG), F140, and R143.

This sequence belongs to the IspF family. As to quaternary structure, homotrimer. The cofactor is a divalent metal cation.

The catalysed reaction is 4-CDP-2-C-methyl-D-erythritol 2-phosphate = 2-C-methyl-D-erythritol 2,4-cyclic diphosphate + CMP. It functions in the pathway isoprenoid biosynthesis; isopentenyl diphosphate biosynthesis via DXP pathway; isopentenyl diphosphate from 1-deoxy-D-xylulose 5-phosphate: step 4/6. In terms of biological role, involved in the biosynthesis of isopentenyl diphosphate (IPP) and dimethylallyl diphosphate (DMAPP), two major building blocks of isoprenoid compounds. Catalyzes the conversion of 4-diphosphocytidyl-2-C-methyl-D-erythritol 2-phosphate (CDP-ME2P) to 2-C-methyl-D-erythritol 2,4-cyclodiphosphate (ME-CPP) with a corresponding release of cytidine 5-monophosphate (CMP). This is 2-C-methyl-D-erythritol 2,4-cyclodiphosphate synthase from Caldicellulosiruptor bescii (strain ATCC BAA-1888 / DSM 6725 / KCTC 15123 / Z-1320) (Anaerocellum thermophilum).